Consider the following 713-residue polypeptide: U3 small nucleolar RNA-associated protein 8 (713 aa).

T95 bears the Phosphothreonine mark. Residues S148 and S150 each carry the phosphoserine modification.

As to quaternary structure, interacts with snoRNA U3. Interacts with MPP10 and UTP25. Component of the ribosomal small subunit (SSU) processome composed of at least 40 protein subunits and snoRNA U3. In the absence of snoRNA3, forms a complex with other t-UTPs. This complex can associate with pre-18S ribosomal RNAs.

It is found in the nucleus. It localises to the nucleolus. Its function is as follows. Involved in nucleolar processing of pre-18S ribosomal RNA. Also has a role in nuclear tRNA export. It acts between the steps of tRNA maturation/aminoacylation and its subsequent translocation out of the nucleus. Required for optimal pre-ribosomal RNA transcription by RNA polymerase I together with a subset of U3 proteins required for transcription (t-UTPs). The chain is U3 small nucleolar RNA-associated protein 8 (UTP8) from Saccharomyces cerevisiae (strain ATCC 204508 / S288c) (Baker's yeast).